The sequence spans 185 residues: Elongation factor P (185 aa).

This sequence belongs to the elongation factor P family.

It localises to the cytoplasm. It functions in the pathway protein biosynthesis; polypeptide chain elongation. Functionally, involved in peptide bond synthesis. Stimulates efficient translation and peptide-bond synthesis on native or reconstituted 70S ribosomes in vitro. Probably functions indirectly by altering the affinity of the ribosome for aminoacyl-tRNA, thus increasing their reactivity as acceptors for peptidyl transferase. This chain is Elongation factor P, found in Desulforudis audaxviator (strain MP104C).